A 642-amino-acid chain; its full sequence is Chaperone protein DnaK (642 aa).

Residue Thr196 is modified to Phosphothreonine; by autocatalysis. Positions 593–603 are enriched in polar residues; it reads STMYQTPSGDT. Positions 593 to 642 are disordered; it reads STMYQTPSGDTPPSEPETGASEESKGGDKTQGDGEVDAEYEVIDGNDKDK. Positions 614-624 are enriched in basic and acidic residues; sequence EESKGGDKTQG. The segment covering 626–636 has biased composition (acidic residues); sequence GEVDAEYEVID.

Belongs to the heat shock protein 70 family.

Functionally, acts as a chaperone. In Chlorobium phaeobacteroides (strain BS1), this protein is Chaperone protein DnaK.